Consider the following 43-residue polypeptide: Cytochrome b559 subunit beta (43 aa).

Residues 18–34 (WLAIHGLAIPTVFFLGG) form a helical membrane-spanning segment. Residue His22 coordinates heme.

Belongs to the PsbE/PsbF family. As to quaternary structure, heterodimer of an alpha subunit and a beta subunit. PSII is composed of 1 copy each of membrane proteins PsbA, PsbB, PsbC, PsbD, PsbE, PsbF, PsbH, PsbI, PsbJ, PsbK, PsbL, PsbM, PsbT, PsbX, PsbY, PsbZ, Psb30/Ycf12, at least 3 peripheral proteins of the oxygen-evolving complex and a large number of cofactors. It forms dimeric complexes. Heme b is required as a cofactor.

The protein localises to the plastid. The protein resides in the chloroplast thylakoid membrane. Functionally, this b-type cytochrome is tightly associated with the reaction center of photosystem II (PSII). PSII is a light-driven water:plastoquinone oxidoreductase that uses light energy to abstract electrons from H(2)O, generating O(2) and a proton gradient subsequently used for ATP formation. It consists of a core antenna complex that captures photons, and an electron transfer chain that converts photonic excitation into a charge separation. The polypeptide is Cytochrome b559 subunit beta (Phaeodactylum tricornutum (strain CCAP 1055/1)).